A 70-amino-acid chain; its full sequence is Putative membrane protein insertion efficiency factor (70 aa).

The protein belongs to the UPF0161 family.

The protein resides in the cell membrane. Functionally, could be involved in insertion of integral membrane proteins into the membrane. The chain is Putative membrane protein insertion efficiency factor from Finegoldia magna (strain ATCC 29328 / DSM 20472 / WAL 2508) (Peptostreptococcus magnus).